Reading from the N-terminus, the 222-residue chain is N-(5'-phosphoribosyl)anthranilate isomerase (222 aa).

Belongs to the TrpF family.

It catalyses the reaction N-(5-phospho-beta-D-ribosyl)anthranilate = 1-(2-carboxyphenylamino)-1-deoxy-D-ribulose 5-phosphate. Its pathway is amino-acid biosynthesis; L-tryptophan biosynthesis; L-tryptophan from chorismate: step 3/5. The protein is N-(5'-phosphoribosyl)anthranilate isomerase of Rhizobium etli (strain CIAT 652).